A 283-amino-acid chain; its full sequence is Lactoylglutathione lyase GLX1 (283 aa).

Alanine 2 is modified (N-acetylalanine). 2 consecutive VOC domains span residues arginine 17 to arginine 141 and proline 147 to asparagine 275. Zn(2+) is bound at residue histidine 20. Substrate is bound at residue arginine 24. Residue glutamate 71 coordinates Zn(2+). Residues asparagine 75 and histidine 89 each contribute to the substrate site. Zn(2+) is bound by residues histidine 89, glutamate 137, and glutamine 150. Glutamate 137 functions as the Proton donor/acceptor in the catalytic mechanism. Glutamine 150 and arginine 154 together coordinate substrate. Glutamine 150 provides a ligand contact to a divalent metal cation. A Zn(2+)-binding site is contributed by glutamate 201. Residue glutamate 201 coordinates a divalent metal cation. Asparagine 205 serves as a coordination point for substrate. Residue glutamine 219 participates in a divalent metal cation binding. Proline 251 to leucine 252 provides a ligand contact to substrate. Valine 271 is an a divalent metal cation binding site.

It belongs to the glyoxalase I family. Homodimer. It depends on Zn(2+) as a cofactor. Phosphorylated by SnRK2.8.

It catalyses the reaction (R)-S-lactoylglutathione = methylglyoxal + glutathione. Its pathway is secondary metabolite metabolism; methylglyoxal degradation; (R)-lactate from methylglyoxal: step 1/2. In terms of biological role, catalyzes the conversion of hemimercaptal, formed from methylglyoxal and glutathione, to S-lactoylglutathione. The chain is Lactoylglutathione lyase GLX1 from Arabidopsis thaliana (Mouse-ear cress).